An 83-amino-acid chain; its full sequence is Cytochrome b559 subunit alpha (83 aa).

A helical transmembrane segment spans residues 21–35; it reads VIHSITIPSLFIAGW. Histidine 23 provides a ligand contact to heme.

The protein belongs to the PsbE/PsbF family. As to quaternary structure, heterodimer of an alpha subunit and a beta subunit. PSII is composed of 1 copy each of membrane proteins PsbA, PsbB, PsbC, PsbD, PsbE, PsbF, PsbH, PsbI, PsbJ, PsbK, PsbL, PsbM, PsbT, PsbX, PsbY, PsbZ, Psb30/Ycf12, at least 3 peripheral proteins of the oxygen-evolving complex and a large number of cofactors. It forms dimeric complexes. Requires heme b as cofactor.

The protein localises to the plastid. Its subcellular location is the chloroplast thylakoid membrane. In terms of biological role, this b-type cytochrome is tightly associated with the reaction center of photosystem II (PSII). PSII is a light-driven water:plastoquinone oxidoreductase that uses light energy to abstract electrons from H(2)O, generating O(2) and a proton gradient subsequently used for ATP formation. It consists of a core antenna complex that captures photons, and an electron transfer chain that converts photonic excitation into a charge separation. This is Cytochrome b559 subunit alpha from Liriodendron tulipifera (Tuliptree).